The chain runs to 660 residues: tRNA 5-methylaminomethyl-2-thiouridine biosynthesis bifunctional protein MnmC (660 aa).

The tRNA (mnm(5)s(2)U34)-methyltransferase stretch occupies residues Met1–Ala242. Residues Ile266–Ala660 are FAD-dependent cmnm(5)s(2)U34 oxidoreductase.

This sequence in the N-terminal section; belongs to the methyltransferase superfamily. tRNA (mnm(5)s(2)U34)-methyltransferase family. The protein in the C-terminal section; belongs to the DAO family. FAD is required as a cofactor.

It is found in the cytoplasm. The enzyme catalyses 5-aminomethyl-2-thiouridine(34) in tRNA + S-adenosyl-L-methionine = 5-methylaminomethyl-2-thiouridine(34) in tRNA + S-adenosyl-L-homocysteine + H(+). Catalyzes the last two steps in the biosynthesis of 5-methylaminomethyl-2-thiouridine (mnm(5)s(2)U) at the wobble position (U34) in tRNA. Catalyzes the FAD-dependent demodification of cmnm(5)s(2)U34 to nm(5)s(2)U34, followed by the transfer of a methyl group from S-adenosyl-L-methionine to nm(5)s(2)U34, to form mnm(5)s(2)U34. In Burkholderia pseudomallei (strain 1710b), this protein is tRNA 5-methylaminomethyl-2-thiouridine biosynthesis bifunctional protein MnmC.